The chain runs to 1133 residues: Eukaryotic translation initiation factor 3 subunit A (1133 aa).

Residues 317 to 498 (IQRMTSHVLI…HCVHFGTDLS (182 aa)) enclose the PCI domain. Coiled-coil stretches lie at residues 573–700 (KKIE…YFER) and 784–886 (EEER…EADS). Over residues 810–893 (KEEERRRAEE…ADSWRDRRGG (84 aa)) the composition is skewed to basic and acidic residues. Residues 810–1133 (KEEERRRAEE…DGWTDVKHHR (324 aa)) form a disordered region. Residues 895–909 (APAAAAQPNPAAQEA) are compositionally biased toward low complexity. Basic and acidic residues-rich tracts occupy residues 920-944 (GAREPRGEDAPKKDGVYQPRFRDVR), 954-1081 (VERR…DSAW), and 1097-1117 (TRQDQAKPKDDRREERPKEAR).

The protein belongs to the eIF-3 subunit A family. As to quaternary structure, component of the eukaryotic translation initiation factor 3 (eIF-3) complex.

The protein resides in the cytoplasm. RNA-binding component of the eukaryotic translation initiation factor 3 (eIF-3) complex, which is involved in protein synthesis of a specialized repertoire of mRNAs and, together with other initiation factors, stimulates binding of mRNA and methionyl-tRNAi to the 40S ribosome. The eIF-3 complex specifically targets and initiates translation of a subset of mRNAs involved in cell proliferation. The sequence is that of Eukaryotic translation initiation factor 3 subunit A from Aedes aegypti (Yellowfever mosquito).